Here is a 471-residue protein sequence, read N- to C-terminus: ATP synthase subunit beta (471 aa).

159–166 (GGAGVGKT) serves as a coordination point for ATP.

Belongs to the ATPase alpha/beta chains family. F-type ATPases have 2 components, CF(1) - the catalytic core - and CF(0) - the membrane proton channel. CF(1) has five subunits: alpha(3), beta(3), gamma(1), delta(1), epsilon(1). CF(0) has four main subunits: a(1), b(1), b'(1) and c(9-12).

The protein localises to the cell membrane. The enzyme catalyses ATP + H2O + 4 H(+)(in) = ADP + phosphate + 5 H(+)(out). Its function is as follows. Produces ATP from ADP in the presence of a proton gradient across the membrane. The catalytic sites are hosted primarily by the beta subunits. This is ATP synthase subunit beta from Heliobacterium modesticaldum (strain ATCC 51547 / Ice1).